Reading from the N-terminus, the 318-residue chain is Sol locus transcriptional repressor (318 aa).

TPR repeat units lie at residues 65-98, 99-132, 133-166, and 167-199; these read ANAYITRERIYFYSRDFELSLRDLLQAIKLRPKT, INDVYSFALSYHILGEPERALKYFLRAVELQPNV, GISYENLAWFYYLTGKYDKAIENFEKAISMGSTN, and SVYRSLGITYAKIGDYKKSEEYLKKALDAEPEK.

Transcriptional repressor of the sol locus (adhE/aad, ctfA, ctfB and adc) genes for butanol and acetone formation. The protein is Sol locus transcriptional repressor (solR) of Clostridium acetobutylicum (strain ATCC 824 / DSM 792 / JCM 1419 / IAM 19013 / LMG 5710 / NBRC 13948 / NRRL B-527 / VKM B-1787 / 2291 / W).